Consider the following 642-residue polypeptide: Probable Xaa-Pro aminopeptidase P (642 aa).

Residues Asp439, Asp450, Glu548, and Glu562 each contribute to the Mn(2+) site.

The protein belongs to the peptidase M24B family. It depends on Mn(2+) as a cofactor.

The enzyme catalyses Release of any N-terminal amino acid, including proline, that is linked to proline, even from a dipeptide or tripeptide.. Catalyzes the removal of a penultimate prolyl residue from the N-termini of peptides. The chain is Probable Xaa-Pro aminopeptidase P (AMPP) from Laccaria bicolor (strain S238N-H82 / ATCC MYA-4686) (Bicoloured deceiver).